The following is a 194-amino-acid chain: Imidazoleglycerol-phosphate dehydratase (194 aa).

It belongs to the imidazoleglycerol-phosphate dehydratase family.

The protein resides in the cytoplasm. The enzyme catalyses D-erythro-1-(imidazol-4-yl)glycerol 3-phosphate = 3-(imidazol-4-yl)-2-oxopropyl phosphate + H2O. Its pathway is amino-acid biosynthesis; L-histidine biosynthesis; L-histidine from 5-phospho-alpha-D-ribose 1-diphosphate: step 6/9. The protein is Imidazoleglycerol-phosphate dehydratase of Bacillus cereus (strain ZK / E33L).